A 924-amino-acid chain; its full sequence is 104 kDa microneme/rhoptry antigen (924 aa).

Positions 1 to 19 are cleaved as a signal peptide; that stretch reads MKFLILLFNILCLFPVLAA. The disordered stretch occupies residues 490–907; that stretch reads SKKKLAPITE…KKPKKPDSAY (418 aa). Composition is skewed to basic and acidic residues over residues 522-532 and 573-588; these read PGDKEGSEGHK and GPKD…EPRK. Low complexity predominate over residues 592-617; that stretch reads PRTASPTRRPSPKLPQLSKLPKSTSP. The span at 653–673 shows a compositional bias: basic and acidic residues; that stretch reads SFKEKFYDDYSKAASRSKETK. Residues 724-736 are compositionally biased toward low complexity; that stretch reads SPSTSPSEFFTPP. Basic and acidic residues-rich tracts occupy residues 737 to 747, 770 to 783, and 816 to 825; these read ESKRTRFHETP, KSPD…RSPS, and DPGRMAKDAS. Positions 857-867 are enriched in acidic residues; it reads DDEGTEADDEE. Over residues 868–878 the composition is skewed to basic and acidic residues; that stretch reads THPPEERQKTE. A compositionally biased stretch (basic residues) spans 879–901; it reads VRRRRPPKKPSKSPRPSKPKKPK. A lipid anchor (GPI-anchor amidated aspartate) is attached at D904. Positions 905 to 924 are cleaved as a propeptide — removed in mature form; it reads SAYIPSILAILVVSLIVGIL.

It localises to the cell membrane. The sequence is that of 104 kDa microneme/rhoptry antigen from Theileria parva (East coast fever infection agent).